Reading from the N-terminus, the 254-residue chain is Acetylglutamate kinase (254 aa).

Substrate-binding positions include 40–41 (GG), Arg-62, and Asn-154. Residues 177–182 (DVSGIL) and 205–207 (IIT) each bind ATP.

It belongs to the acetylglutamate kinase family. ArgB subfamily. In terms of assembly, homodimer.

Its subcellular location is the cytoplasm. The catalysed reaction is N-acetyl-L-glutamate + ATP = N-acetyl-L-glutamyl 5-phosphate + ADP. The protein operates within amino-acid biosynthesis; L-arginine biosynthesis; N(2)-acetyl-L-ornithine from L-glutamate: step 2/4. Functionally, catalyzes the ATP-dependent phosphorylation of N-acetyl-L-glutamate. The polypeptide is Acetylglutamate kinase (Yersinia enterocolitica serotype O:8 / biotype 1B (strain NCTC 13174 / 8081)).